A 156-amino-acid polypeptide reads, in one-letter code: Cellulose synthase operon protein D (156 aa).

It functions in the pathway glycan metabolism; bacterial cellulose biosynthesis. Functionally, may have a major role in the perfection of crystallization, involved either in the pore structure itself or in the organization of the pores within the linear array of terminal synthesizing complexes (TCs). In Komagataeibacter xylinus (Gluconacetobacter xylinus), this protein is Cellulose synthase operon protein D.